Here is a 339-residue protein sequence, read N- to C-terminus: Glycerol-3-phosphate dehydrogenase [NAD(P)+] (339 aa).

Residues S15, Y16, H36, and K110 each contribute to the NADPH site. Sn-glycerol 3-phosphate contacts are provided by K110, G139, and T141. Residue A143 coordinates NADPH. Residues K195, D248, S258, R259, and N260 each coordinate sn-glycerol 3-phosphate. Residue K195 is the Proton acceptor of the active site. An NADPH-binding site is contributed by R259. NADPH-binding residues include V283 and E285.

Belongs to the NAD-dependent glycerol-3-phosphate dehydrogenase family.

It is found in the cytoplasm. It catalyses the reaction sn-glycerol 3-phosphate + NAD(+) = dihydroxyacetone phosphate + NADH + H(+). The enzyme catalyses sn-glycerol 3-phosphate + NADP(+) = dihydroxyacetone phosphate + NADPH + H(+). Its pathway is membrane lipid metabolism; glycerophospholipid metabolism. Functionally, catalyzes the reduction of the glycolytic intermediate dihydroxyacetone phosphate (DHAP) to sn-glycerol 3-phosphate (G3P), the key precursor for phospholipid synthesis. This chain is Glycerol-3-phosphate dehydrogenase [NAD(P)+], found in Shigella flexneri serotype 5b (strain 8401).